Consider the following 151-residue polypeptide: Putative pre-16S rRNA nuclease (151 aa).

The protein belongs to the YqgF nuclease family.

It is found in the cytoplasm. Functionally, could be a nuclease involved in processing of the 5'-end of pre-16S rRNA. This Bifidobacterium adolescentis (strain ATCC 15703 / DSM 20083 / NCTC 11814 / E194a) protein is Putative pre-16S rRNA nuclease.